The following is a 560-amino-acid chain: Ribonuclease J 1 (560 aa).

Residues His-76, His-78, Asp-80, His-81, His-144, and Asp-166 each contribute to the Zn(2+) site. Position 366 to 370 (366 to 370 (HTSGH)) interacts with substrate. His-392 serves as a coordination point for Zn(2+).

The protein belongs to the metallo-beta-lactamase superfamily. RNA-metabolizing metallo-beta-lactamase-like family. Bacterial RNase J subfamily. Homodimer, may be a subunit of the RNA degradosome. Zn(2+) is required as a cofactor.

It localises to the cytoplasm. Its function is as follows. An RNase that has 5'-3' exonuclease and possibly endonuclease activity. Involved in maturation of rRNA and in some organisms also mRNA maturation and/or decay. Has an overlapping but not completely redundant role with RNase J2 in the decay of mRNA. The sequence is that of Ribonuclease J 1 from Streptococcus pyogenes serotype M3 (strain ATCC BAA-595 / MGAS315).